Here is a 184-residue protein sequence, read N- to C-terminus: MSSSYFIATRASKFLSYVLRHRPDSIGVTLDAQGWADVSELLTKAAAAGMALTLDELKQVVAENDKKRFVLNDDATRIRAAQGHSVDVDLQLPVKAPPPVLYHGTVGKSMADIRKQGLTPMNRHDVHLSPDRETATRVATRRGKPVILVIETYPLLRDGYQFRVSDNGVWLVPEVPAKYIKFPG.

It belongs to the KptA/TPT1 family.

Functionally, removes the 2'-phosphate from RNA via an intermediate in which the phosphate is ADP-ribosylated by NAD followed by a presumed transesterification to release the RNA and generate ADP-ribose 1''-2''-cyclic phosphate (APPR&gt;P). May function as an ADP-ribosylase. The polypeptide is Probable RNA 2'-phosphotransferase (Burkholderia pseudomallei (strain K96243)).